Reading from the N-terminus, the 119-residue chain is Large ribosomal subunit protein uL18 (119 aa).

It belongs to the universal ribosomal protein uL18 family. In terms of assembly, part of the 50S ribosomal subunit; part of the 5S rRNA/L5/L18/L25 subcomplex. Contacts the 5S and 23S rRNAs.

Its function is as follows. This is one of the proteins that bind and probably mediate the attachment of the 5S RNA into the large ribosomal subunit, where it forms part of the central protuberance. This Chlorobium luteolum (strain DSM 273 / BCRC 81028 / 2530) (Pelodictyon luteolum) protein is Large ribosomal subunit protein uL18.